The following is an 815-amino-acid chain: Calpain-3 (815 aa).

The interval 7-36 (ASVAPRTAAEPRSPGPVPHPAQSKATEAGG) is disordered. Residues 74-417 (LYVDPEFPPD…FTKLEICNLT (344 aa)) form the Calpain catalytic domain. Residues Cys-129, His-334, and Asn-358 contribute to the active site. The segment at 418–586 (ADALQSDKLQ…KRNLSEEVEN (169 aa)) is domain III. Residues 587–649 (TISVDRPVPI…QESEEQQQFR (63 aa)) form a linker region. Residues 605 to 646 (SNKELGVDQESEEGKGKTSPDKQEQSPQPQPGSSDQESEEQQ) form a disordered region. The span at 616–628 (EEGKGKTSPDKQE) shows a compositional bias: basic and acidic residues. The span at 629 to 639 (QSPQPQPGSSD) shows a compositional bias: low complexity. EF-hand domains follow at residues 643–677 (EEQQ…VVNK), 686–719 (FTLE…NKIK), 716–751 (NKIK…AGFH), and 781–815 (VRLE…TMYA). Positions 650–815 (NIFKQIAGDD…LEWLQLTMYA (166 aa)) are domain IV. Positions 656, 659, 661, 666, 699, 701, 703, 705, 710, 729, 731, 733, 735, 740, 794, 796, 798, and 800 each coordinate Ca(2+).

The protein belongs to the peptidase C2 family. As to quaternary structure, homodimer; via EF-hand domain 4. Interacts with TTN/titin. Interacts with CMYA5; this interaction, which results in CMYA5 proteolysis, may protect CAPN3 from autolysis. Interacts with SIMC1. Interacts with UTP25; the interaction is required for CAPN3 translocation to the nucleolus.

It is found in the cytoplasm. The protein resides in the nucleus. The protein localises to the nucleolus. It carries out the reaction Broad endopeptidase activity.. Its activity is regulated as follows. Activated by micromolar concentrations of calcium and inhibited by calpastatin. Its function is as follows. Calcium-regulated non-lysosomal thiol-protease. Proteolytically cleaves CTBP1. Mediates, with UTP25, the proteasome-independent degradation of p53/TP53. The polypeptide is Calpain-3 (CAPN3) (Macaca fascicularis (Crab-eating macaque)).